Here is a 275-residue protein sequence, read N- to C-terminus: Voltage-dependent calcium channel gamma-5 subunit (275 aa).

4 helical membrane-spanning segments follow: residues 8–28 (ALTL…GIAV), 103–123 (FPLV…IGHI), 129–149 (ILAF…VVGL), and 181–201 (FAAI…YLFM).

The protein belongs to the PMP-22/EMP/MP20 family. CACNG subfamily. In terms of assembly, the L-type calcium channel is composed of five subunits: alpha-1, alpha-2/delta, beta and gamma. Acts as an auxiliary subunit for AMPA-selective glutamate receptors (AMPARs). Found in a complex with GRIA1, GRIA2, GRIA3, GRIA4, CNIH2, CNIH3, CACNG2, CACNG3, CACNG4, CACNG7 and CACNG8. Interacts with GRIA1, GRIA2, GRIA3 and GRIA4.

It localises to the membrane. Its subcellular location is the postsynaptic density membrane. Functionally, regulates the gating properties of AMPA-selective glutamate receptors (AMPARs). Modulates their gating properties by accelerating their rates of activation, deactivation and desensitization. Displays subunit-specific AMPA receptor regulation. Shows specificity for GRIA1, GRIA4 and the long isoform of GRIA2. According to PubMed:18817736, shows only specificity for GRIA2 and specifically to the form of GRIA2 for which a single amino acid in the pore region has been edited from a glutamine to an arginine residue. Thought to stabilize the calcium channel in an inactivated (closed) state. In Rattus norvegicus (Rat), this protein is Voltage-dependent calcium channel gamma-5 subunit (Cacng5).